A 711-amino-acid polypeptide reads, in one-letter code: Nucleolin (711 aa).

The tract at residues 1–304 is disordered; sequence MVKLAKAGKN…KKQKVEGTEP (304 aa). N6-acetyllysine occurs at positions 9, 15, and 16. Positions 24 to 43 are enriched in acidic residues; it reads VEEDSEDEEMSEDEEDDSSG. Phosphoserine occurs at positions 28, 34, 41, and 42. The span at 56–107 shows a compositional bias: low complexity; that stretch reads AAATSAKKVVVSPTKKVAVATPAKKAAVTPGKKAAATPAKKTVTPAKAVATP. The stretch at 58–65 is repeat 1; the sequence is ATSAKKVV. The segment at 58 to 135 is 8 X 8 AA tandem repeats of X-T-P-X-K-K-X-X; it reads ATSAKKVVVS…GAAIPAKGAK (78 aa). Ser67 carries the post-translational modification Phosphoserine. Residues Thr69, Thr76, Thr84, and Thr92 each carry the phosphothreonine modification. Tandem repeats lie at residues 75 to 82, 83 to 90, and 91 to 98. Lys96 carries the N6-acetyllysine modification. Position 99 is a phosphothreonine (Thr99). One copy of the 5; truncated repeat lies at 99–104; sequence TPAKAV. N6-acetyllysine is present on Lys102. Repeat unit 6 spans residues 105–112; that stretch reads ATPGKKGA. The residue at position 106 (Thr106) is a Phosphothreonine. Lys109 bears the N6-acetyllysine mark. Phosphothreonine is present on Thr113. An N6-acetyllysine modification is found at Lys116. 2 repeat units span residues 120–127 and 128–135. Thr121 is subject to Phosphothreonine. The span at 122-137 shows a compositional bias: low complexity; it reads PGKKGAAIPAKGAKNG. The residue at position 124 (Lys124) is an N6-acetyllysine. Phosphoserine is present on residues Ser145, Ser153, Ser184, and Ser207. Composition is skewed to acidic residues over residues 145–171 and 184–212; these read SDEE…DEIE and SEDE…EEAM. Position 215 is a phosphothreonine (Thr215). The segment covering 235 to 273 has biased composition (acidic residues); sequence EDEDEEEDDEDEDDDDDEDDEDEDDDDEDEEEEEEEEEP. Residues 274–301 show a composition bias toward basic and acidic residues; that stretch reads VKEAPGKRKKEMAKQKAAPEAKKQKVEG. Lys298 participates in a covalent cross-link: Glycyl lysine isopeptide (Lys-Gly) (interchain with G-Cter in SUMO1); alternate. Residue Lys298 forms a Glycyl lysine isopeptide (Lys-Gly) (interchain with G-Cter in SUMO2); alternate linkage. The residue at position 302 (Thr302) is a Phosphothreonine. RRM domains lie at 308–384 and 394–467; these read FNLF…KPKG and RTLL…YTGE. An N6-acetyllysine modification is found at Lys319. A Glycyl lysine isopeptide (Lys-Gly) (interchain with G-Cter in SUMO1); alternate cross-link involves residue Lys325. Residue Lys325 forms a Glycyl lysine isopeptide (Lys-Gly) (interchain with G-Cter in SUMO2); alternate linkage. Lys349 bears the N6-acetyllysine mark. The residue at position 357 (Ser357) is a Phosphoserine. Thr368 bears the Phosphothreonine mark. Residue Lys371 forms a Glycyl lysine isopeptide (Lys-Gly) (interchain with G-Cter in SUMO2) linkage. Residue Lys378 forms a Glycyl lysine isopeptide (Lys-Gly) (interchain with G-Cter in SUMO2); alternate linkage. Lys378 carries the N6-acetyllysine; alternate modification. Residues Lys399 and Lys404 each carry the N6-acetyllysine modification. Thr406 carries the phosphothreonine modification. An N6-acetyllysine mark is found at Lys428 and Lys445. Phosphoserine occurs at positions 459 and 461. Lys468 and Lys478 each carry N6-acetyllysine. One can recognise an RRM 3 domain in the interval 487–561; the sequence is KTLVLSNLSY…RAIRLELQGP (75 aa). A Glycyl lysine isopeptide (Lys-Gly) (interchain with G-Cter in SUMO2); alternate cross-link involves residue Lys514. Lys514 carries the post-translational modification N6-acetyllysine; alternate. Residue Lys522 is modified to N6-acetyllysine. At Ser564 the chain carries Phosphoserine. At Lys573 the chain carries N6-acetyllysine. The RRM 4 domain maps to 573 to 648; it reads KTLFVKGLSE…NKVTLDWAKP (76 aa). A Glycyl lysine isopeptide (Lys-Gly) (interchain with G-Cter in SUMO2); alternate cross-link involves residue Lys578. Residue Lys578 is modified to N6-acetyllysine; alternate. The residue at position 581 (Ser581) is a Phosphoserine. Residue Lys590 forms a Glycyl lysine isopeptide (Lys-Gly) (interchain with G-Cter in SUMO1); alternate linkage. Lys590 participates in a covalent cross-link: Glycyl lysine isopeptide (Lys-Gly) (interchain with G-Cter in SUMO2); alternate. 2 positions are modified to phosphoserine: Ser592 and Ser620. A Glycyl lysine isopeptide (Lys-Gly) (interchain with G-Cter in SUMO2) cross-link involves residue Lys625. The segment at 641–711 is disordered; the sequence is VTLDWAKPKG…KPQGKKTKFE (71 aa). Residue Lys647 is modified to N6-acetyllysine. Positions 651-697 are enriched in gly residues; it reads EGGFGGRGGGRGGFGGRGGGRGGRGGFGGRGRGGFGGRGGFRGGRGG. Asymmetric dimethylarginine is present on residues Arg657, Arg661, Arg667, Arg671, Arg674, Arg680, Arg682, Arg688, and Arg692. Arg695 bears the Asymmetric dimethylarginine; alternate mark. At Arg695 the chain carries Omega-N-methylarginine; alternate. Positions 698-711 are enriched in basic and acidic residues; the sequence is GGDHKPQGKKTKFE.

As to quaternary structure, identified in a IGF2BP1-dependent mRNP granule complex containing untranslated mRNAs. Component of the SWAP complex that consists of NPM1, NCL/nucleolin, PARP1 and SWAP70. Component of a complex which is at least composed of HTATSF1/Tat-SF1, the P-TEFb complex components CDK9 and CCNT1, RNA polymerase II, SUPT5H, and NCL/nucleolin. Interacts with AICDA. Interacts with APTX. Interacts with C1QBP. Interacts with ERBB4. Interacts (via C-terminus) with FMR1 isoform 6 (via N-terminus). Interacts with GZF1; this interaction is important for nucleolar localization of GZF1. Interacts with NSUN2. Interacts with NVL. Interacts (via N-terminus domain) with SETX. Interacts (via RRM1 and C-terminal RRM4/Arg/Gly-rich domains) with TERT; the interaction is important for nucleolar localization of TERT. Interacts with WDR46. Interacts with ZFP36. Interacts with LRRC34. Interacts with RRP1B. Interacts with HNRNPU; this interaction occurs during mitosis. Interacts with RIOK1; RIOK1 recruits NCL to PRMT5 for symmetrically methylation. Interacts with ZBTB7B. Interacts with MDK; this interaction promotes NCL clustering and lateral movements of this complex into lipid rafts leading to MDK internalization. Interacts with HDGF. Interacts with ALKBH2. Interacts with IGFBP5; this interaction is necessary for IGFBP5 localization to the nucleus. Post-translationally, some glutamate residues are glycylated by TTLL8. This modification occurs exclusively on glutamate residues and results in a glycine chain on the gamma-carboxyl group. Symmetrically methylated by PRMT5.

It is found in the nucleus. The protein resides in the nucleolus. The protein localises to the cytoplasm. In terms of biological role, nucleolin is the major nucleolar protein of growing eukaryotic cells. It is found associated with intranucleolar chromatin and pre-ribosomal particles. It induces chromatin decondensation by binding to histone H1. It is thought to play a role in pre-rRNA transcription and ribosome assembly. May play a role in the process of transcriptional elongation. Binds RNA oligonucleotides with 5'-UUAGGG-3' repeats more tightly than the telomeric single-stranded DNA 5'-TTAGGG-3' repeats. The sequence is that of Nucleolin (NCL) from Macaca fascicularis (Crab-eating macaque).